A 396-amino-acid chain; its full sequence is Serine/threonine-protein kinase VRK1 (396 aa).

The 281-residue stretch at tryptophan 37–tyrosine 317 folds into the Protein kinase domain. ATP-binding positions include isoleucine 43–isoleucine 51 and lysine 71. A Glycyl lysine isopeptide (Lys-Gly) (interchain with G-Cter in SUMO2) cross-link involves residue lysine 71. Residue aspartate 177 is the Proton acceptor of the active site. A Phosphoserine; by PLK3 modification is found at serine 342. The tract at residues isoleucine 354–lysine 396 is disordered. At threonine 355 the chain carries Phosphothreonine; by autocatalysis. The span at lysine 360–glycine 369 shows a compositional bias: basic and acidic residues. Residues tryptophan 375–arginine 387 are compositionally biased toward polar residues. Position 376 is a phosphoserine (serine 376). Threonine 378 is subject to Phosphothreonine. The tract at residues arginine 387–arginine 393 is required for interaction with the nucleosome.

The protein belongs to the protein kinase superfamily. CK1 Ser/Thr protein kinase family. VRK subfamily. As to quaternary structure, interacts with HDAC1, KAT2B, SETDB1, KDM3A and KDM4A. Associates with the nucleosome through interactions with nucleosome DNA, histone H2A and histone H2B; the interaction with H2A and H2B is mediated by the nucleosome acidic patch, a cluster of negatively charged residues of H2A and H2B forming a cleft within the nucleosome core. (Microbial infection) Interacts with vaccinia protein B12; this interaction inhibits the repressive activity of the vaccinia virus B12 pseudokinase on viral replication factory formation. Post-translationally, autophosphorylated at various serine and threonine residues. Autophosphorylation does not impair its ability to phosphorylate p53/TP53. Phosphorylation by PLK3 leads to induction of Golgi fragmentation during mitosis. In terms of tissue distribution, widely expressed. Highly expressed in fetal liver, testis and thymus.

The protein localises to the nucleus. It localises to the cytoplasm. The protein resides in the cajal body. It carries out the reaction L-seryl-[protein] + ATP = O-phospho-L-seryl-[protein] + ADP + H(+). It catalyses the reaction L-threonyl-[protein] + ATP = O-phospho-L-threonyl-[protein] + ADP + H(+). With respect to regulation, active in presence of Mn(2+), Mg(2+) and Zn(2+), but is not functional with Ca(2+) or Cu(2+). Has a higher affinity for Mn(2+) than for Mg(2+). RAN inhibits its autophosphorylation and its ability to phosphorylate histone H3. Serine/threonine kinase involved in the regulation of key cellular processes including the cell cycle, nuclear condensation, transcription regulation, and DNA damage response. Controls chromatin organization and remodeling by mediating phosphorylation of histone H3 on 'Thr-4' and histone H2AX (H2aXT4ph). It also phosphorylates KAT5 in response to DNA damage, promoting KAT5 association with chromatin and histone acetyltransferase activity. Is involved in the regulation of cell cycle progression of neural progenitors, and is required for proper cortical neuronal migration. Is involved in neurite elongation and branching in motor neurons, and has an essential role in Cajal bodies assembly, acting through COIL phosphorylation and the control of coilin degradation. Involved in Golgi disassembly during the cell cycle: following phosphorylation by PLK3 during mitosis, it is required to induce Golgi fragmentation. Phosphorylates BANF1: disrupts its ability to bind DNA, reduces its binding to LEM domain-containing proteins and causes its relocalization from the nucleus to the cytoplasm. Phosphorylates TP53BP1 and p53/TP53 on 'Thr-18', preventing the interaction between p53/TP53 and MDM2. Phosphorylates ATF2 which activates its transcriptional activity. Phosphorylates JUN. The sequence is that of Serine/threonine-protein kinase VRK1 from Homo sapiens (Human).